A 496-amino-acid polypeptide reads, in one-letter code: Anaerobic nitric oxide reductase flavorubredoxin (496 aa).

The tract at residues threonine 30–isoleucine 210 is zinc metallo-hydrolase. 6 residues coordinate Fe cation: histidine 79, glutamate 81, aspartate 83, histidine 147, aspartate 166, and histidine 227. The region spanning isoleucine 254–alanine 393 is the Flavodoxin-like domain. FMN-binding positions include serine 260–asparagine 264 and alanine 342–valine 369. The Rubredoxin-like domain maps to lysine 444–isoleucine 495. Fe cation is bound by residues cysteine 449, cysteine 452, cysteine 482, and cysteine 485.

It in the N-terminal section; belongs to the zinc metallo-hydrolase group 3 family. Homotetramer. The cofactor is Fe cation. FMN serves as cofactor.

It localises to the cytoplasm. It functions in the pathway nitrogen metabolism; nitric oxide reduction. Its function is as follows. Anaerobic nitric oxide reductase; uses NADH to detoxify nitric oxide (NO), protecting several 4Fe-4S NO-sensitive enzymes. Has at least 2 reductase partners, only one of which (NorW, flavorubredoxin reductase) has been identified. NO probably binds to the di-iron center; electrons enter from the NorW at rubredoxin and are transferred sequentially to the FMN center and the di-iron center. Also able to function as an aerobic oxygen reductase. The polypeptide is Anaerobic nitric oxide reductase flavorubredoxin (Aliivibrio fischeri (strain ATCC 700601 / ES114) (Vibrio fischeri)).